The sequence spans 313 residues: MSKVTVVGAGNVGATCANVLAFNEVADEVVMLDVKEGVSEGKAMDMMQTAQLLGFDTKVVGCTNDYEKTANSDVVVITSGIPRKPGMTREELIGVNAGIVKSVAQNILKYSPNAILVVISNPMDTMTYLSLKSLGLPKNRIIGMGGALDSSRFKYFLSQALGCNANEVEGMVIGGHGDTTMIPLARLATYKGIPVSKLLSAEKLQEVVASTMVGGATLTKLLGTSAWYAPGAAGAFVVESIIHNQGKMVPCSVYLEGEYGESDLCIGVPVILGKNGIEKIVELELTAEEKELFAKSAAAVHKTNEALKEVGAL.

NAD(+)-binding positions include 8–13 (GAGNVG) and Asp33. Residues Arg83 and Arg89 each coordinate substrate. NAD(+) is bound by residues Asn96 and 119-121 (ISN). The substrate site is built by Asn121 and Arg152. The Proton acceptor role is filled by His176.

It belongs to the LDH/MDH superfamily. MDH type 3 family.

The enzyme catalyses (S)-malate + NAD(+) = oxaloacetate + NADH + H(+). In terms of biological role, catalyzes the reversible oxidation of malate to oxaloacetate. This is Malate dehydrogenase from Parabacteroides distasonis (strain ATCC 8503 / DSM 20701 / CIP 104284 / JCM 5825 / NCTC 11152).